Consider the following 914-residue polypeptide: Translation initiation factor IF-2 (914 aa).

2 disordered regions span residues 52–84 (GGGKAAEGAAKAPAKAAAKGDAKTAAKGDVKAP) and 98–326 (AGGN…GVRL). Low complexity predominate over residues 57–68 (AEGAAKAPAKAA). Over residues 69–84 (AKGDAKTAAKGDVKAP) the composition is skewed to basic and acidic residues. Over residues 98 to 138 (AGGNGEAAAPPAQPGGTATTPAAQATPEAPARPGPAAARPS) the composition is skewed to low complexity. 2 stretches are compositionally biased toward pro residues: residues 139–169 (APAPGQPKPPAPGQPPRPGATPGPRPGPAPK) and 193–207 (PRPVPRPGAPRPGAP). Residues 236–296 (RPGGGRPGGP…GAAGAFGRPG (61 aa)) are compositionally biased toward gly residues. Basic residues predominate over residues 300 to 309 (RRGRKSKRQK). Positions 421 to 581 (TRPPVVTVMG…AVLLTADAAL (161 aa)) constitute a tr-type G domain. GTP contacts are provided by residues 430-437 (GHVDHGKT), 469-473 (DTPGH), and 523-526 (NKID).

This sequence belongs to the TRAFAC class translation factor GTPase superfamily. Classic translation factor GTPase family. IF-2 subfamily.

It is found in the cytoplasm. One of the essential components for the initiation of protein synthesis. Protects formylmethionyl-tRNA from spontaneous hydrolysis and promotes its binding to the 30S ribosomal subunits. Also involved in the hydrolysis of GTP during the formation of the 70S ribosomal complex. In Mycobacterium avium (strain 104), this protein is Translation initiation factor IF-2.